The following is a 168-amino-acid chain: Type-2 ice-structuring protein (168 aa).

Positions 1–17 (MLTVSLLVCAMMALTQA) are cleaved as a signal peptide. A propeptide spanning residues 18–34 (DHDGVLKGTATEAGEVS) is cleaved from the precursor. Intrachain disulfides connect cysteine 45/cysteine 56, cysteine 73/cysteine 163, cysteine 107/cysteine 138, cysteine 127/cysteine 149, and cysteine 139/cysteine 155. The C-type lectin domain occupies 52-164 (HGQRCFYSEA…CPASHASICA (113 aa)).

Its subcellular location is the secreted. Has antifreeze activity to protect fish blood from freezing at subzero sea water temperatures. Binds to ice crystals and inhibits their growth. The thermal hysteresis (TH) activity, the ability to lower the blood freezing point, is approximately 0.45 degrees Celsius at 0.15 mM for this protein. The protein is Type-2 ice-structuring protein of Brachyopsis segaliensis (Sea poacher).